A 262-amino-acid polypeptide reads, in one-letter code: Nickel import ATP-binding protein NikD (262 aa).

One can recognise an ABC transporter domain in the interval 6–249 (LAIEGLTATT…PGHEVTRMLV (244 aa)). Residue 42-49 (GASGSGKS) coordinates ATP.

It belongs to the ABC transporter superfamily. Nickel importer (TC 3.A.1.5.3) family. As to quaternary structure, the complex is composed of two ATP-binding proteins (NikD and NikE), two transmembrane proteins (NikB and NikC) and a solute-binding protein (NikA).

The protein resides in the cell inner membrane. It carries out the reaction Ni(2+)(out) + ATP + H2O = Ni(2+)(in) + ADP + phosphate + H(+). Functionally, part of the ABC transporter complex NikABCDE involved in nickel import. Responsible for energy coupling to the transport system. The polypeptide is Nickel import ATP-binding protein NikD (Brucella suis biovar 1 (strain 1330)).